The chain runs to 484 residues: Protein nucleotidyltransferase YdiU (484 aa).

G87, G89, R90, K110, D122, G123, R173, and R180 together coordinate ATP. The active-site Proton acceptor is the D249. Mg(2+) is bound by residues N250 and D259. Residue D259 participates in ATP binding. The interval 463 to 484 is disordered; the sequence is EQEKYAELPPPSDRPYRTFCGT.

Belongs to the SELO family. It depends on Mg(2+) as a cofactor. The cofactor is Mn(2+).

It carries out the reaction L-seryl-[protein] + ATP = 3-O-(5'-adenylyl)-L-seryl-[protein] + diphosphate. It catalyses the reaction L-threonyl-[protein] + ATP = 3-O-(5'-adenylyl)-L-threonyl-[protein] + diphosphate. The enzyme catalyses L-tyrosyl-[protein] + ATP = O-(5'-adenylyl)-L-tyrosyl-[protein] + diphosphate. The catalysed reaction is L-histidyl-[protein] + UTP = N(tele)-(5'-uridylyl)-L-histidyl-[protein] + diphosphate. It carries out the reaction L-seryl-[protein] + UTP = O-(5'-uridylyl)-L-seryl-[protein] + diphosphate. It catalyses the reaction L-tyrosyl-[protein] + UTP = O-(5'-uridylyl)-L-tyrosyl-[protein] + diphosphate. Its function is as follows. Nucleotidyltransferase involved in the post-translational modification of proteins. It can catalyze the addition of adenosine monophosphate (AMP) or uridine monophosphate (UMP) to a protein, resulting in modifications known as AMPylation and UMPylation. This chain is Protein nucleotidyltransferase YdiU, found in Geobacillus kaustophilus (strain HTA426).